A 166-amino-acid chain; its full sequence is Small ribosomal subunit protein uS5 (166 aa).

The 64-residue stretch at 11-74 (LQEKLVQVNR…EAARKNMVDV (64 aa)) folds into the S5 DRBM domain.

It belongs to the universal ribosomal protein uS5 family. In terms of assembly, part of the 30S ribosomal subunit. Contacts proteins S4 and S8.

Its function is as follows. With S4 and S12 plays an important role in translational accuracy. In terms of biological role, located at the back of the 30S subunit body where it stabilizes the conformation of the head with respect to the body. In Marinobacter nauticus (strain ATCC 700491 / DSM 11845 / VT8) (Marinobacter aquaeolei), this protein is Small ribosomal subunit protein uS5.